The following is a 389-amino-acid chain: S-adenosylmethionine synthase (389 aa).

Histidine 15 contributes to the ATP binding site. Aspartate 17 serves as a coordination point for Mg(2+). Glutamate 43 is a binding site for K(+). L-methionine contacts are provided by glutamate 56 and glutamine 99. A flexible loop region spans residues glutamine 99 to glutamate 109. Residues aspartate 166 to lysine 168, arginine 234 to phenylalanine 235, aspartate 243, arginine 249 to lysine 250, alanine 266, and lysine 270 contribute to the ATP site. Residue aspartate 243 coordinates L-methionine. Lysine 274 serves as a coordination point for L-methionine.

It belongs to the AdoMet synthase family. In terms of assembly, homotetramer; dimer of dimers. Requires Mg(2+) as cofactor. The cofactor is K(+).

Its subcellular location is the cytoplasm. The catalysed reaction is L-methionine + ATP + H2O = S-adenosyl-L-methionine + phosphate + diphosphate. Its pathway is amino-acid biosynthesis; S-adenosyl-L-methionine biosynthesis; S-adenosyl-L-methionine from L-methionine: step 1/1. In terms of biological role, catalyzes the formation of S-adenosylmethionine (AdoMet) from methionine and ATP. The overall synthetic reaction is composed of two sequential steps, AdoMet formation and the subsequent tripolyphosphate hydrolysis which occurs prior to release of AdoMet from the enzyme. The polypeptide is S-adenosylmethionine synthase (Neisseria meningitidis serogroup B (strain ATCC BAA-335 / MC58)).